We begin with the raw amino-acid sequence, 346 residues long: 4-hydroxy-3-methylbut-2-enyl diphosphate reductase (346 aa).

Cys-19 serves as a coordination point for [4Fe-4S] cluster. Residues His-48 and His-84 each contribute to the (2E)-4-hydroxy-3-methylbut-2-enyl diphosphate site. Dimethylallyl diphosphate is bound by residues His-48 and His-84. 2 residues coordinate isopentenyl diphosphate: His-48 and His-84. A [4Fe-4S] cluster-binding site is contributed by Cys-106. (2E)-4-hydroxy-3-methylbut-2-enyl diphosphate is bound at residue His-134. His-134 contacts dimethylallyl diphosphate. His-134 serves as a coordination point for isopentenyl diphosphate. Glu-136 serves as the catalytic Proton donor. Thr-175 is a (2E)-4-hydroxy-3-methylbut-2-enyl diphosphate binding site. Cys-205 contacts [4Fe-4S] cluster. The (2E)-4-hydroxy-3-methylbut-2-enyl diphosphate site is built by Ser-233, Ser-234, Asn-235, and Ser-278. Dimethylallyl diphosphate-binding residues include Ser-233, Ser-234, Asn-235, and Ser-278. Residues Ser-233, Ser-234, Asn-235, and Ser-278 each coordinate isopentenyl diphosphate.

The protein belongs to the IspH family. [4Fe-4S] cluster is required as a cofactor.

The catalysed reaction is isopentenyl diphosphate + 2 oxidized [2Fe-2S]-[ferredoxin] + H2O = (2E)-4-hydroxy-3-methylbut-2-enyl diphosphate + 2 reduced [2Fe-2S]-[ferredoxin] + 2 H(+). It carries out the reaction dimethylallyl diphosphate + 2 oxidized [2Fe-2S]-[ferredoxin] + H2O = (2E)-4-hydroxy-3-methylbut-2-enyl diphosphate + 2 reduced [2Fe-2S]-[ferredoxin] + 2 H(+). Its pathway is isoprenoid biosynthesis; dimethylallyl diphosphate biosynthesis; dimethylallyl diphosphate from (2E)-4-hydroxy-3-methylbutenyl diphosphate: step 1/1. It functions in the pathway isoprenoid biosynthesis; isopentenyl diphosphate biosynthesis via DXP pathway; isopentenyl diphosphate from 1-deoxy-D-xylulose 5-phosphate: step 6/6. Catalyzes the conversion of 1-hydroxy-2-methyl-2-(E)-butenyl 4-diphosphate (HMBPP) into a mixture of isopentenyl diphosphate (IPP) and dimethylallyl diphosphate (DMAPP). Acts in the terminal step of the DOXP/MEP pathway for isoprenoid precursor biosynthesis. The protein is 4-hydroxy-3-methylbut-2-enyl diphosphate reductase of Brucella suis biovar 1 (strain 1330).